Reading from the N-terminus, the 310-residue chain is Olfactory receptor 2A7 (310 aa).

The Extracellular portion of the chain corresponds to 1-24 (MGDNITSITEFLLLGFPVGPRIQM). Residue N4 is glycosylated (N-linked (GlcNAc...) asparagine). Residues 25 to 48 (LLFGLFSLFYVFTLLGNGTILGLI) form a helical membrane-spanning segment. Topologically, residues 49-56 (SLDSRLHA) are cytoplasmic. A helical transmembrane segment spans residues 57–78 (PMYFFLSHLAVVDIAYACNTVP). Over 79-99 (RMLVNLLHPAKPISFAGRMMQ) the chain is Extracellular. Residues 100–119 (TFLFSTFAVTECLLLVVMSY) form a helical membrane-spanning segment. At 120-138 (DLYVAICHPLRYLAIMTWR) the chain is on the cytoplasmic side. The helical transmembrane segment at 139–157 (VCITLAVTSWTTGVLLSLI) threads the bilayer. The Extracellular portion of the chain corresponds to 158–194 (HLVLLLPLPFCRPQKIYHFFCEILAVLKLACADTHIN). A helical membrane pass occupies residues 195-218 (ENMVLAGAISGLVGPLSTIVVSYM). At 219 to 235 (CILCAILQIQSREVQRK) the chain is on the cytoplasmic side. A helical transmembrane segment spans residues 236-258 (AFCTCFSHLCVIGLFYGTAIIMY). Residues 259–271 (VGPRYGNPKEQKK) are Extracellular-facing. The helical transmembrane segment at 272-291 (YLLLFHSLFNPMLNPLICSL) threads the bilayer. Residues 292-310 (RNSEVKNTLKRVLGVERAL) are Cytoplasmic-facing.

The protein belongs to the G-protein coupled receptor 1 family.

The protein localises to the cell membrane. Its function is as follows. Odorant receptor. The sequence is that of Olfactory receptor 2A7 (OR2A7) from Homo sapiens (Human).